A 293-amino-acid polypeptide reads, in one-letter code: Bifunctional protein FolD (293 aa).

NADP(+)-binding positions include 169 to 171, Thr196, and Val237; that span reads GRG.

Belongs to the tetrahydrofolate dehydrogenase/cyclohydrolase family. In terms of assembly, homodimer.

It catalyses the reaction (6R)-5,10-methylene-5,6,7,8-tetrahydrofolate + NADP(+) = (6R)-5,10-methenyltetrahydrofolate + NADPH. The catalysed reaction is (6R)-5,10-methenyltetrahydrofolate + H2O = (6R)-10-formyltetrahydrofolate + H(+). Its pathway is one-carbon metabolism; tetrahydrofolate interconversion. Catalyzes the oxidation of 5,10-methylenetetrahydrofolate to 5,10-methenyltetrahydrofolate and then the hydrolysis of 5,10-methenyltetrahydrofolate to 10-formyltetrahydrofolate. In Leifsonia xyli subsp. xyli (strain CTCB07), this protein is Bifunctional protein FolD.